The primary structure comprises 46 residues: Apamin (46 aa).

The first 27 residues, 1–27 (MISMLRCISLFLSVILITGYFVTPVMS), serve as a signal peptide directing secretion. Cystine bridges form between C28–C38 and C30–C42. The tract at residues 40-41 (RR) is essential for toxin activity. H45 is subject to Histidine amide.

In terms of tissue distribution, expressed by the venom gland.

The protein resides in the secreted. Functionally, neurotoxin that blocks voltage-independent calcium-activated potassium channels (KCNN1=SK1, KCNN2=SK2, KCNN3=SK3). The sequence is that of Apamin from Apis cerana cerana (Oriental honeybee).